A 211-amino-acid chain; its full sequence is Thymidylate kinase (211 aa).

An ATP-binding site is contributed by 10–17 (GVEGCGKT).

Belongs to the thymidylate kinase family.

It catalyses the reaction dTMP + ATP = dTDP + ADP. In terms of biological role, phosphorylation of dTMP to form dTDP in both de novo and salvage pathways of dTTP synthesis. The polypeptide is Thymidylate kinase (Nostoc punctiforme (strain ATCC 29133 / PCC 73102)).